A 454-amino-acid polypeptide reads, in one-letter code: Chromosomal replication initiator protein DnaA (454 aa).

A domain I, interacts with DnaA modulators region spans residues 1 to 79 (MSLCLWKQCL…NSPFIKFKVY (79 aa)). The tract at residues 79–117 (YQTSKEKKFKKNILQKIQNLNAKPIWDKIPIFKKSSHRS) is domain II. A domain III, AAA+ region region spans residues 118-334 (NINKKHSFEN…GALNRVIVNA (217 aa)). ATP-binding residues include Gly162, Gly164, Lys165, and Thr166. A domain IV, binds dsDNA region spans residues 335 to 454 (NFTHRSITVE…FSNLIRTLSV (120 aa)).

Belongs to the DnaA family. In terms of assembly, oligomerizes as a right-handed, spiral filament on DNA at oriC.

It localises to the cytoplasm. Functionally, plays an essential role in the initiation and regulation of chromosomal replication. ATP-DnaA binds to the origin of replication (oriC) to initiate formation of the DNA replication initiation complex once per cell cycle. Binds the DnaA box (a 9 base pair repeat at the origin) and separates the double-stranded (ds)DNA. Forms a right-handed helical filament on oriC DNA; dsDNA binds to the exterior of the filament while single-stranded (ss)DNA is stabiized in the filament's interior. The ATP-DnaA-oriC complex binds and stabilizes one strand of the AT-rich DNA unwinding element (DUE), permitting loading of DNA polymerase. After initiation quickly degrades to an ADP-DnaA complex that is not apt for DNA replication. Binds acidic phospholipids. The sequence is that of Chromosomal replication initiator protein DnaA from Buchnera aphidicola subsp. Schizaphis graminum (strain Sg).